Reading from the N-terminus, the 891-residue chain is Protein translocase subunit SecA 1 (891 aa).

Residues Gln-85, 103–107 (GEGKT), and Asp-491 contribute to the ATP site. Residues Cys-877, Cys-879, Cys-888, and Cys-889 each coordinate Zn(2+).

The protein belongs to the SecA family. As to quaternary structure, monomer and homodimer. Part of the essential Sec protein translocation apparatus which comprises SecA, SecYEG and auxiliary proteins SecDF. Other proteins may also be involved. It depends on Zn(2+) as a cofactor.

It is found in the cell membrane. Its subcellular location is the cytoplasm. It carries out the reaction ATP + H2O + cellular proteinSide 1 = ADP + phosphate + cellular proteinSide 2.. Functionally, part of the Sec protein translocase complex. Interacts with the SecYEG preprotein conducting channel. Has a central role in coupling the hydrolysis of ATP to the transfer of proteins into and across the cell membrane, serving as an ATP-driven molecular motor driving the stepwise translocation of polypeptide chains across the membrane. In Clostridioides difficile (strain 630) (Peptoclostridium difficile), this protein is Protein translocase subunit SecA 1.